The following is a 151-amino-acid chain: uncharacterized protein (151 aa).

A coiled-coil region spans residues 35–147 (GIFENERQKL…RETLQESLED (113 aa)).

This is an uncharacterized protein from Helicobacter hepaticus (strain ATCC 51449 / 3B1).